The sequence spans 198 residues: MSRYRGPRLKIIRRLKTLPGLTSKRPKNRKDSMNRSSSRKISQYRIRLEEKQKLRFHYGLTERQLLKYVRIARRAKGSRVRSIAITEMRLDKSFSIGYGSTSGARQLVNHGHIRVNDHMVDIPSYPCKPQDVITIRDQQRLRAIIKKNIDLFQRDKLPNHLTFHSLQYKGFINQIIDSKWINLKINELLVVEYYSRQA.

Residues 17 to 40 (TLPGLTSKRPKNRKDSMNRSSSRK) form a disordered region. Residues 88-154 (MRLDKSFSIG…IKKNIDLFQR (67 aa)) enclose the S4 RNA-binding domain.

This sequence belongs to the universal ribosomal protein uS4 family. Part of the 30S ribosomal subunit. Contacts protein S5. The interaction surface between S4 and S5 is involved in control of translational fidelity.

Its subcellular location is the plastid. The protein localises to the chloroplast. Its function is as follows. One of the primary rRNA binding proteins, it binds directly to 16S rRNA where it nucleates assembly of the body of the 30S subunit. With S5 and S12 plays an important role in translational accuracy. The polypeptide is Small ribosomal subunit protein uS4c (rps4) (Pinus thunbergii (Japanese black pine)).